Consider the following 362-residue polypeptide: Oxygen-dependent coproporphyrinogen-III oxidase (362 aa).

A disordered region spans residues 12–31; it reads RQENDQSTPQLELPPTDSRD. Substrate is bound at residue Ser118. Residues His122 and His132 each coordinate a divalent metal cation. His132 functions as the Proton donor in the catalytic mechanism. Position 134–136 (134–136) interacts with substrate; the sequence is NYR. Residues His166 and His196 each contribute to the a divalent metal cation site. Residues 286–321 form an important for dimerization region; it reads YVEFNLVWDRGTIFGLQTNGRTESILMSLPPLVRWE.

Belongs to the aerobic coproporphyrinogen-III oxidase family. In terms of assembly, homodimer. It depends on a divalent metal cation as a cofactor.

The protein localises to the cytoplasm. The catalysed reaction is coproporphyrinogen III + O2 + 2 H(+) = protoporphyrinogen IX + 2 CO2 + 2 H2O. The protein operates within porphyrin-containing compound metabolism; protoporphyrin-IX biosynthesis; protoporphyrinogen-IX from coproporphyrinogen-III (O2 route): step 1/1. In terms of biological role, involved in the heme and chlorophyll biosynthesis. Catalyzes the aerobic oxidative decarboxylation of propionate groups of rings A and B of coproporphyrinogen-III to yield the vinyl groups in protoporphyrinogen-IX. This is Oxygen-dependent coproporphyrinogen-III oxidase from Synechococcus sp. (strain CC9902).